A 421-amino-acid chain; its full sequence is Testin (421 aa).

A PET domain is found at 92–199 (MILTNPVAAK…GDVKLPYEMG (108 aa)). Residues 133–164 (EKQPVAGSEGAQYRKKQLAKQLPAHDQDPSKC) form a disordered region. The span at 155–164 (PAHDQDPSKC) shows a compositional bias: basic and acidic residues. LIM zinc-binding domains lie at 234 to 297 (YFCY…CDSE), 299 to 359 (PRCA…NHAV), and 362 to 421 (QGCH…KMMS).

The protein belongs to the prickle / espinas / testin family. As to quaternary structure, interacts via LIM domain 1 with ZYX. Interacts (via LIM domain 3) with ENAH and VASP. Interacts with ALKBH4, talin, actin, alpha-actinin, GRIP1 and PXN. Interacts (via LIM domain 2) with ACTL7A (via N-terminus). Heterodimer with ACTL7A; the heterodimer interacts with ENAH to form a heterotrimer.

It localises to the cytoplasm. It is found in the cell junction. Its subcellular location is the focal adhesion. In terms of biological role, scaffold protein that may play a role in cell adhesion, cell spreading and in the reorganization of the actin cytoskeleton. Plays a role in the regulation of cell proliferation. May act as a tumor suppressor. The chain is Testin (TES) from Oryctolagus cuniculus (Rabbit).